A 1222-amino-acid chain; its full sequence is PAN2-PAN3 deadenylation complex catalytic subunit PAN2 (1222 aa).

2 WD repeats span residues 104-143 and 276-315; these read PEMT…IVDQ and ANVA…HFNE. Residues 316–451 are linker; the sequence is IGKETEFSDI…GLKINGETKE (136 aa). A USP domain is found at 452 to 821; the sequence is DPLLKYSNVE…SPCTLAYQIS (370 aa). The Exonuclease domain maps to 871–1027; the sequence is ALDTEFVDLE…WAVFKEYIQE (157 aa). Residues D873, E875, and D982 each contribute to the a divalent metal cation site. The interval 1035–1067 is disordered; the sequence is TSITTTTNPNIHDANTSTTTTTAITTTPPEGHD. Low complexity predominate over residues 1050–1061; sequence TSTTTTTAITTT. D1071 contacts a divalent metal cation. Disordered stretches follow at residues 1110 to 1152 and 1167 to 1222; these read PARY…LSGR and ASVT…SPMR. Positions 1119-1133 are enriched in low complexity; it reads PNPNNNNINNGVNPN. Positions 1134 to 1144 are enriched in polar residues; it reads GLSTPGSTNPI. The span at 1180-1191 shows a compositional bias: low complexity; it reads NGSMSGSTPSTP. Residues 1207–1216 show a composition bias toward gly residues; sequence SFGGAKGLTF.

Belongs to the peptidase C19 family. PAN2 subfamily. In terms of assembly, forms a heterotrimer with an asymmetric homodimer of the regulatory subunit PAN3 to form the poly(A)-nuclease (PAN) deadenylation complex. A divalent metal cation serves as cofactor.

The protein localises to the cytoplasm. The enzyme catalyses Exonucleolytic cleavage of poly(A) to 5'-AMP.. With respect to regulation, positively regulated by the regulatory subunit PAN3. Its function is as follows. Catalytic subunit of the poly(A)-nuclease (PAN) deadenylation complex, one of two cytoplasmic mRNA deadenylases involved in mRNA turnover. PAN specifically shortens poly(A) tails of RNA and the activity is stimulated by poly(A)-binding protein PAB1. PAN deadenylation is followed by rapid degradation of the shortened mRNA tails by the CCR4-NOT complex. Deadenylated mRNAs are then degraded by two alternative mechanisms, namely exosome-mediated 3'-5' exonucleolytic degradation, or deadenylation-dependent mRNA decaping and subsequent 5'-3' exonucleolytic degradation by XRN1. May also be involved in post-transcriptional maturation of mRNA poly(A) tails. This is PAN2-PAN3 deadenylation complex catalytic subunit PAN2 from Coccidioides immitis (strain RS) (Valley fever fungus).